We begin with the raw amino-acid sequence, 129 residues long: MTPLDVMWVCLGGGVGSLGRWWIGRIVGEYHHGAFPLGTFLINISGAFVIGYLSVLFGVDWHDRYGTMLNAGVLTGILGGYTTFSSMQLDAVKLSHKGQGGLAVFYLVASVLSGLFAAWLGAMLAHLQG.

4 helical membrane passes run 4–24 (LDVM…WWIG), 39–59 (TFLI…LFGV), 65–85 (YGTM…TTFS), and 104–124 (VFYL…GAML). 2 residues coordinate Na(+): Gly-79 and Thr-82.

It belongs to the fluoride channel Fluc/FEX (TC 1.A.43) family.

It localises to the cell inner membrane. The enzyme catalyses fluoride(in) = fluoride(out). With respect to regulation, na(+) is not transported, but it plays an essential structural role and its presence is essential for fluoride channel function. Fluoride-specific ion channel. Important for reducing fluoride concentration in the cell, thus reducing its toxicity. This Brucella abortus biovar 1 (strain 9-941) protein is Fluoride-specific ion channel FluC 2.